Reading from the N-terminus, the 61-residue chain is MDTKLLDILACPICKGPLKLSADKTELISKGAGLAYPVRDGIPVMLESEARTLTTDERLDK.

The protein belongs to the UPF0434 family.

This chain is UPF0434 protein PSPTO_3844, found in Pseudomonas syringae pv. tomato (strain ATCC BAA-871 / DC3000).